The primary structure comprises 176 residues: 2-oxo-4-hydroxy-4-carboxy-5-ureidoimidazoline decarboxylase (176 aa).

The active-site Proton donor; for OHCU decarboxylase activity is His70. Substrate contacts are provided by residues Pro71, 83 to 87, and 118 to 122; these read SQEEQ and FIMAV. Residues 72-96 form a disordered region; that stretch reads DLGERTEMTDESQEEQASAGLDRLP.

It belongs to the OHCU decarboxylase family.

The enzyme catalyses 5-hydroxy-2-oxo-4-ureido-2,5-dihydro-1H-imidazole-5-carboxylate + H(+) = (S)-allantoin + CO2. The protein operates within purine metabolism; urate degradation; (S)-allantoin from urate: step 3/3. In terms of biological role, catalyzes the stereoselective decarboxylation of 2-oxo-4-hydroxy-4-carboxy-5-ureidoimidazoline (OHCU) to (S)-allantoin. The chain is 2-oxo-4-hydroxy-4-carboxy-5-ureidoimidazoline decarboxylase from Halalkalicoccus jeotgali (strain DSM 18796 / CECT 7217 / JCM 14584 / KCTC 4019 / B3).